An 82-amino-acid chain; its full sequence is uncharacterized protein (82 aa).

This is an uncharacterized protein from Lactococcus lactis subsp. lactis (Streptococcus lactis).